We begin with the raw amino-acid sequence, 793 residues long: MSARTPLPTVNERDTENHTSVDGYTETHIPPTKSSSRQNIPRCRNSITSATDEQPHIGNYRLQKTIGKGNFAKVKLARHVLTGREVAVKIIDKTQLNPTSLQKLFREVRIMKILNHPNIVKLFEVIETEKTLYLVMEYASGGEVFDYLVAHGRMKEKEARAKFRQIVSAVQYCHQKCIVHRDLKAENLLLDADMNIKIADFGFSNEFTVGNKLDTFCGSPPYAAPELFQGKKYDGPEVDVWSLGVILYTLVSGSLPFDGQNLKELRERVLRGKYRVPFYMSTDCENLLKKLLVLNPIKRGSLEQIMKDRWMNVGHEEEELKPYSEPELDLNDAKRIDIMVTMGFARDEINDALVSQKYDEVMATYILLGRKPPEFEGGESLSSGNLCQRSRPSSDLNNSTLQSPAHLKVQRSISANQKQRRFSDHAGPSIPPAVSYTKRPQANSVESEQKEEWDKDTARRLGSTTVGSKSEVTASPLVGPDRKKSSAGPSNNVYSGGSMTRRNTYVCERSTDRYAALQNGRDSSLTEMSASSMSSTGSTVASAGPSARPRHQKSMSTSGHPIKVTLPTIKDGSEAYRPGTAQRVPAASPSAHSISASTPDRTRFPRGSSSRSTFHGEQLRERRSAAYSGPPASPSHDTAALAHARRGTSTGIISKITSKFVRRDPSEGEASGRTDTARGSSGEPKDKEEGKEAKPRSLRFTWSMKTTSSMDPNDMVREIRKVLDANTCDYEQRERFLLFCVHGDARQDSLVQWEMEVCKLPRLSLNGVRFKRISGTSIAFKNIASKIANELKL.

The segment at 1 to 40 is disordered; it reads MSARTPLPTVNERDTENHTSVDGYTETHIPPTKSSSRQNI. Thr5 is subject to Phosphothreonine. The region spanning 60–311 is the Protein kinase domain; sequence YRLQKTIGKG…LEQIMKDRWM (252 aa). Residues 66–74 and Lys89 each bind ATP; that span reads IGKGNFAKV. Residue Asp182 is the Proton acceptor of the active site. At Thr208 the chain carries Phosphothreonine. A Phosphothreonine; by LKB1 and TAOK1 modification is found at Thr215. Residue Ser219 is modified to Phosphoserine; by GSK3-beta. The UBA domain occupies 329–370; that stretch reads DLNDAKRIDIMVTMGFARDEINDALVSQKYDEVMATYILLGR. Disordered regions lie at residues 377-499 and 517-697; these read GGES…GGSM and LQNG…KPRS. Positions 380–403 are enriched in polar residues; that stretch reads SLSSGNLCQRSRPSSDLNNSTLQS. Residues Ser382, Ser390, Ser393, Ser403, Ser423, and Ser444 each carry the phosphoserine modification. Residues 447-459 are compositionally biased toward basic and acidic residues; the sequence is SEQKEEWDKDTAR. The segment covering 462-473 has biased composition (polar residues); sequence GSTTVGSKSEVT. Position 475 is a phosphoserine (Ser475). Residues 487-499 show a composition bias toward polar residues; it reads AGPSNNVYSGGSM. 2 stretches are compositionally biased toward low complexity: residues 523-547 and 585-599; these read SSLT…GPSA and PAAS…ASTP. Ser588 is subject to Phosphoserine. Residue Thr613 is modified to Phosphothreonine; by PKC/PRKCZ. Residues 647–657 are compositionally biased toward polar residues; the sequence is GTSTGIISKIT. Basic and acidic residues-rich tracts occupy residues 661–676 and 683–695; these read VRRD…RTDT and EPKD…EAKP. Residue Ser666 is modified to Phosphoserine. The 50-residue stretch at 744-793 folds into the KA1 domain; that stretch reads DARQDSLVQWEMEVCKLPRLSLNGVRFKRISGTSIAFKNIASKIANELKL.

This sequence belongs to the protein kinase superfamily. CAMK Ser/Thr protein kinase family. SNF1 subfamily. In terms of assembly, interacts with MAPT/TAU. Requires Mg(2+) as cofactor. Phosphorylation at Thr-613 by PRKCZ/aPKC in polarized epithelial cells inhibits the kinase activity. Phosphorylated at Thr-215 by STK11/LKB1 in complex with STE20-related adapter-alpha (STRADA) pseudo kinase and CAB39. Phosphorylation at Thr-215 by TAOK1 activates the kinase activity, leading to phosphorylation and detachment of MAPT/TAU from microtubules. Phosphorylation at Ser-219 by GSK3-beta (GSK3B) inhibits the kinase activity. As to expression, highly expressed in brain and spleen and at lower levels in kidney and skeletal muscle.

The protein resides in the cell membrane. The protein localises to the cytoplasm. It is found in the cytoskeleton. It localises to the cell projection. Its subcellular location is the dendrite. It catalyses the reaction L-seryl-[protein] + ATP = O-phospho-L-seryl-[protein] + ADP + H(+). The catalysed reaction is L-threonyl-[protein] + ATP = O-phospho-L-threonyl-[protein] + ADP + H(+). It carries out the reaction L-seryl-[tau protein] + ATP = O-phospho-L-seryl-[tau protein] + ADP + H(+). The enzyme catalyses L-threonyl-[tau protein] + ATP = O-phospho-L-threonyl-[tau protein] + ADP + H(+). Activated by phosphorylation on Thr-215. Inhibited by phosphorylation at Ser-219. In terms of biological role, serine/threonine-protein kinase. Involved in cell polarity and microtubule dynamics regulation. Phosphorylates DCX, MAP2 and MAP4. Phosphorylates the microtubule-associated protein MAPT/TAU. Involved in cell polarity by phosphorylating the microtubule-associated proteins MAP2, MAP4 and MAPT/TAU at KXGS motifs, causing detachment from microtubules, and their disassembly. Involved in the regulation of neuronal migration through its dual activities in regulating cellular polarity and microtubule dynamics, possibly by phosphorylating and regulating DCX. Also acts as a positive regulator of the Wnt signaling pathway, probably by mediating phosphorylation of dishevelled proteins (DVL1, DVL2 and/or DVL3). The chain is Serine/threonine-protein kinase MARK1 from Rattus norvegicus (Rat).